The following is a 153-amino-acid chain: Insulin-like growth factor 1 (153 aa).

Residues 49 to 77 (GPETLCGAELVDALQFVCGDRGFYFNKPT) are b. Intrachain disulfides connect cysteine 54–cysteine 96, cysteine 66–cysteine 109, and cysteine 95–cysteine 100. The tract at residues 78–89 (GYGSSSRRAPQT) is c. An a region spans residues 90–110 (GIVDECCFRSCDLRRLEMYCA). Residues 111–118 (PLKPAKSA) are d. A propeptide spans 119–153 (RSVRAQRHTDMPKAQKEVHLKNASRGSAGNKNYRM) (e peptide). The disordered stretch occupies residues 120 to 153 (SVRAQRHTDMPKAQKEVHLKNASRGSAGNKNYRM). A compositionally biased stretch (basic and acidic residues) spans 125–138 (RHTDMPKAQKEVHL). Residues 142-153 (SRGSAGNKNYRM) show a composition bias toward polar residues.

The protein belongs to the insulin family. Forms a ternary complex with IGFR1 and ITGAV:ITGB3. Forms a ternary complex with IGFR1 and ITGA6:ITGB4. Forms a ternary complex with IGFBP3 and ALS.

It localises to the secreted. Its function is as follows. The insulin-like growth factors, isolated from plasma, are structurally and functionally related to insulin but have a much higher growth-promoting activity. May be a physiological regulator of [1-14C]-2-deoxy-D-glucose (2DG) transport and glycogen synthesis in osteoblasts. Stimulates glucose transport in bone-derived osteoblastic (PyMS) cells and is effective at much lower concentrations than insulin, not only regarding glycogen and DNA synthesis but also with regard to enhancing glucose uptake. May play a role in synapse maturation. Ca(2+)-dependent exocytosis of IGF1 is required for sensory perception of smell in the olfactory bulb. Acts as a ligand for IGF1R. Binds to the alpha subunit of IGF1R, leading to the activation of the intrinsic tyrosine kinase activity which autophosphorylates tyrosine residues in the beta subunit thus initiating a cascade of down-stream signaling events leading to activation of the PI3K-AKT/PKB and the Ras-MAPK pathways. Binds to integrins ITGAV:ITGB3 and ITGA6:ITGB4. Its binding to integrins and subsequent ternary complex formation with integrins and IGFR1 are essential for IGF1 signaling. Induces the phosphorylation and activation of IGFR1, MAPK3/ERK1, MAPK1/ERK2 and AKT1. As part of the MAPK/ERK signaling pathway, acts as a negative regulator of apoptosis in cardiomyocytes via promotion of STUB1/CHIP-mediated ubiquitination and degradation of ICER-type isoforms of CREM. The chain is Insulin-like growth factor 1 from Canis lupus familiaris (Dog).